A 694-amino-acid chain; its full sequence is Elongation factor G (694 aa).

Residues 8–287 (EDYRNFGIMA…AVVEFLPAPT (280 aa)) enclose the tr-type G domain. Residues 17-24 (AHIDAGKT), 86-90 (DTPGH), and 140-143 (NKMD) contribute to the GTP site.

The protein belongs to the TRAFAC class translation factor GTPase superfamily. Classic translation factor GTPase family. EF-G/EF-2 subfamily.

The protein localises to the cytoplasm. In terms of biological role, catalyzes the GTP-dependent ribosomal translocation step during translation elongation. During this step, the ribosome changes from the pre-translocational (PRE) to the post-translocational (POST) state as the newly formed A-site-bound peptidyl-tRNA and P-site-bound deacylated tRNA move to the P and E sites, respectively. Catalyzes the coordinated movement of the two tRNA molecules, the mRNA and conformational changes in the ribosome. The polypeptide is Elongation factor G (Brucella ovis (strain ATCC 25840 / 63/290 / NCTC 10512)).